A 456-amino-acid chain; its full sequence is Alcohol acyltransferase 1 (456 aa).

Residues His166 and Asp382 each act as proton acceptor in the active site.

Belongs to the plant acyltransferase family.

Involved in the biosynthesis of volatile esters which confer kiwifruit flavor. Alcohol acyl transferase that can use a wide range of alcohols as substrate to produce esters. The polypeptide is Alcohol acyltransferase 1 (Actinidia chinensis var. chinensis (Chinese soft-hair kiwi)).